A 542-amino-acid chain; its full sequence is Membrane protein insertase YidC (542 aa).

A run of 6 helical transmembrane segments spans residues 6 to 26, 326 to 346, 350 to 370, 421 to 441, 458 to 478, and 501 to 521; these read NILLIGLLFVSFLLWQQWQTD, LVVDYGFLWWLAIPIHWLLMF, FVGNWGVAIILITLTVRGMLY, GGCLPILLQMPIFIALYWVLL, LSVQDPYYVLPLLMGVSMFLM, and VIFTVFFLWFPAGLVLYWLVG.

The protein belongs to the OXA1/ALB3/YidC family. Type 1 subfamily. Interacts with the Sec translocase complex via SecD. Specifically interacts with transmembrane segments of nascent integral membrane proteins during membrane integration.

It localises to the cell inner membrane. In terms of biological role, required for the insertion and/or proper folding and/or complex formation of integral membrane proteins into the membrane. Involved in integration of membrane proteins that insert both dependently and independently of the Sec translocase complex, as well as at least some lipoproteins. Aids folding of multispanning membrane proteins. This is Membrane protein insertase YidC from Shewanella loihica (strain ATCC BAA-1088 / PV-4).